The chain runs to 113 residues: Pro-corazonin (113 aa).

The signal sequence occupies residues 1–19 (MATNITMFLIVITLTSVAA). Pyrrolidone carboxylic acid is present on Gln20. At Asn30 the chain carries Asparagine amide. A disordered region spans residues 74–96 (LGPCDTSKTRSTTNPSDTNTSAV). The span at 82–96 (TRSTTNPSDTNTSAV) shows a compositional bias: polar residues.

The protein belongs to the corazonin family. As to expression, four pairs of lateral neurosecretory cells in the brains of late instar larvae, pupae and adults.

It localises to the secreted. Functionally, cardioactive peptide. Corazonin is probably involved in the physiological regulation of the heart beat. This is Pro-corazonin from Galleria mellonella (Greater wax moth).